The sequence spans 538 residues: MKAFPVICLGFAIFSSSICVNINILQQIGYIKQQVWQLSYYSQSSSSYVVVKLLPNIQPTDNSCEFKSVTQYNKTLSNLLLPIAENINNIASPSPGSRRHKRFAGIAIGIAALGVATAAQVTAAVSLVQAQTNARAIAAMKNSIQATNRAVFEVKEGTQQLAIAVQAIQDHINTIMNTQLNNMSCQILDNQLATSLGLYLTELTTVFQPQLINPALSPISIQALRSLLGSMTPAVVQATLSTSISAAEILSAGLMEGQIVSVLLDEMQMIVKINIPTIVTQSNALVIDFHSISSFINNQESIIQLPDRILEIGNEQWRYPAKNCKLTRHHIFCQYNEAERLSLETKLCLAGNISACVFSPIAGSYMRRFVALDGTIVANCRSLTCLCKSPSYPIYQPDHHAVTTIDLTSCQTLSLDGLDFSIVSLSNITYAENLTISLSQTINTQPIDISTELSKVNASLQNAVKYIKESNHQLQSVSVSSKIGAIIVAALVLSILSIIISLLFCCWAYIATKEIRRINFKTNHINTISSSVDDLIRY.

The first 19 residues, 1-19 (MKAFPVICLGFAIFSSSIC), serve as a signal peptide directing secretion. N-linked (GlcNAc...) asparagine; by host glycans are attached at residues Asn-56 and Asn-73. A fusion peptide region spans residues 103–127 (FAGIAIGIAALGVATAAQVTAAVSL). An N-linked (GlcNAc...) asparagine; by host glycan is attached at Asn-182. 4 disulfides stabilise this stretch: Cys-324-Cys-333, Cys-348-Cys-356, Cys-380-Cys-385, and Cys-387-Cys-410. The N-linked (GlcNAc...) asparagine; by host glycan is linked to Asn-352. Residues Asn-427, Asn-433, and Asn-457 are each glycosylated (N-linked (GlcNAc...) asparagine; by host). Residues 483-503 (IGAIIVAALVLSILSIIISLL) form a helical membrane-spanning segment.

This sequence belongs to the paramyxoviruses fusion glycoprotein family. Homotrimer; disulfide-linked F1-F2. Interacts with host LAMP1; LAMP2 and LAMP3; these interactions promote the cleavage of the viral fusion protein F. The inactive precursor F0 is glycosylated and proteolytically cleaved into F1 and F2 to be functionally active. The cleavage is mediated by cellular proteases including host FURIN during the transport and maturation of the polypeptide.

It is found in the virion membrane. It localises to the host cell membrane. In terms of biological role, class I viral fusion protein. Under the current model, the protein has at least 3 conformational states: pre-fusion native state, pre-hairpin intermediate state, and post-fusion hairpin state. During viral and plasma cell membrane fusion, the heptad repeat (HR) regions assume a trimer-of-hairpins structure, positioning the fusion peptide in close proximity to the C-terminal region of the ectodomain. The formation of this structure appears to drive apposition and subsequent fusion of viral and plasma cell membranes. Directs fusion of viral and cellular membranes leading to delivery of the nucleocapsid into the cytoplasm. This fusion is pH independent and occurs directly at the outer cell membrane. The trimer of F1-F2 (F protein) probably interacts with HN at the virion surface. Upon HN binding to its cellular receptor, the hydrophobic fusion peptide is unmasked and interacts with the cellular membrane, inducing the fusion between cell and virion membranes. Later in infection, F proteins expressed at the plasma membrane of infected cells could mediate fusion with adjacent cells to form syncytia, a cytopathic effect that could lead to tissue necrosis. This Mumps virus (strain Kilham) (MuV) protein is Fusion glycoprotein F0 (F).